A 215-amino-acid polypeptide reads, in one-letter code: Methylosome subunit pICln (215 aa).

Disordered regions lie at residues 88–120 (GDPP…DEDD) and 160–215 (HPDS…DADE). 3 stretches are compositionally biased toward acidic residues: residues 105-120 (AEVD…DEDD), 167-190 (DSED…EDDA), and 203-215 (LDDD…DADE).

The protein belongs to the pICln (TC 1.A.47) family. In terms of assembly, component of the methylosome, a 20S complex containing at least CLNS1A/pICln, PRMT5/SKB1 and WDR77/MEP50; may mediate SNRPD1 and SNRPD3 methylation. Forms a 6S pICln-Sm complex composed of CLNS1A/pICln, SNRPD1, SNRPD2, SNRPE, SNRPF and SNRPG; ring-like structure where CLNS1A/pICln mimics additional Sm proteins and which is unable to assemble into the core snRNP.

The protein resides in the cytoplasm. It is found in the cytosol. Its subcellular location is the nucleus. The protein localises to the cytoskeleton. Its function is as follows. Involved in both the assembly of spliceosomal snRNPs and the methylation of Sm proteins. Chaperone that regulates the assembly of spliceosomal U1, U2, U4 and U5 small nuclear ribonucleoproteins (snRNPs), the building blocks of the spliceosome, and thereby plays an important role in the splicing of cellular pre-mRNAs. Most spliceosomal snRNPs contain a common set of Sm proteins SNRPB, SNRPD1, SNRPD2, SNRPD3, SNRPE, SNRPF and SNRPG that assemble in a heptameric protein ring on the Sm site of the small nuclear RNA to form the core snRNP (Sm core). In the cytosol, the Sm proteins SNRPD1, SNRPD2, SNRPE, SNRPF and SNRPG are trapped in an inactive 6S pICln-Sm complex by the chaperone CLNS1A that controls the assembly of the core snRNP. Dissociation by the SMN complex of CLNS1A from the trapped Sm proteins and their transfer to an SMN-Sm complex triggers the assembly of core snRNPs and their transport to the nucleus. This is Methylosome subunit pICln (icln) from Drosophila melanogaster (Fruit fly).